The following is a 249-amino-acid chain: 5'-nucleotidase SurE (249 aa).

Positions 9, 10, 40, and 92 each coordinate a divalent metal cation.

The protein belongs to the SurE nucleotidase family. It depends on a divalent metal cation as a cofactor.

The protein resides in the cytoplasm. The enzyme catalyses a ribonucleoside 5'-phosphate + H2O = a ribonucleoside + phosphate. Its function is as follows. Nucleotidase that shows phosphatase activity on nucleoside 5'-monophosphates. The sequence is that of 5'-nucleotidase SurE from Shewanella baltica (strain OS195).